Here is a 275-residue protein sequence, read N- to C-terminus: Tryptophan synthase alpha chain (275 aa).

Active-site proton acceptor residues include Glu-60 and Asp-71.

It belongs to the TrpA family. Tetramer of two alpha and two beta chains.

The enzyme catalyses (1S,2R)-1-C-(indol-3-yl)glycerol 3-phosphate + L-serine = D-glyceraldehyde 3-phosphate + L-tryptophan + H2O. It participates in amino-acid biosynthesis; L-tryptophan biosynthesis; L-tryptophan from chorismate: step 5/5. The alpha subunit is responsible for the aldol cleavage of indoleglycerol phosphate to indole and glyceraldehyde 3-phosphate. The polypeptide is Tryptophan synthase alpha chain (Prochlorococcus marinus (strain MIT 9313)).